The sequence spans 174 residues: Large ribosomal subunit protein uL10 (174 aa).

It belongs to the universal ribosomal protein uL10 family. In terms of assembly, part of the ribosomal stalk of the 50S ribosomal subunit. The N-terminus interacts with L11 and the large rRNA to form the base of the stalk. The C-terminus forms an elongated spine to which L12 dimers bind in a sequential fashion forming a multimeric L10(L12)X complex.

Functionally, forms part of the ribosomal stalk, playing a central role in the interaction of the ribosome with GTP-bound translation factors. This Verminephrobacter eiseniae (strain EF01-2) protein is Large ribosomal subunit protein uL10.